Consider the following 198-residue polypeptide: Glycerol-3-phosphate acyltransferase (198 aa).

Transmembrane regions (helical) follow at residues 10–30 (LIPI…WILV), 57–77 (GISF…ILIL), 86–106 (IMYL…WFLF), 118–138 (VVLS…AVVF), and 160–180 (AVTE…IVLI).

This sequence belongs to the PlsY family. As to quaternary structure, probably interacts with PlsX.

It is found in the cell inner membrane. The enzyme catalyses an acyl phosphate + sn-glycerol 3-phosphate = a 1-acyl-sn-glycero-3-phosphate + phosphate. It participates in lipid metabolism; phospholipid metabolism. Its function is as follows. Catalyzes the transfer of an acyl group from acyl-phosphate (acyl-PO(4)) to glycerol-3-phosphate (G3P) to form lysophosphatidic acid (LPA). This enzyme utilizes acyl-phosphate as fatty acyl donor, but not acyl-CoA or acyl-ACP. The sequence is that of Glycerol-3-phosphate acyltransferase from Anaplasma marginale (strain St. Maries).